The following is a 171-amino-acid chain: Secreted LysM effector Blys4 (171 aa).

Residues 125–169 (KPYTIHQGDTCWDIAESHSVGVDDILTLNPELDCDKLSIGSQICL) enclose the LysM domain.

This sequence belongs to the secreted LysM effector family.

Might have a role in sequestration of chitin oligosaccharides (breakdown products of fungal cell walls that are released during invasion and act as triggers of host immunity) to dampen host defense. This Beauveria bassiana (strain ARSEF 2860) (White muscardine disease fungus) protein is Secreted LysM effector Blys4.